A 330-amino-acid polypeptide reads, in one-letter code: Malate dehydrogenase (330 aa).

NAD(+) is bound at residue Gly-15–Ala-21. Substrate-binding residues include Arg-96 and Arg-102. NAD(+) contacts are provided by residues Asn-109, Gln-116, and Val-133–Asn-135. Substrate contacts are provided by Asn-135 and Arg-166. The active-site Proton acceptor is the His-191.

Belongs to the LDH/MDH superfamily. MDH type 2 family.

The enzyme catalyses (S)-malate + NAD(+) = oxaloacetate + NADH + H(+). In terms of biological role, catalyzes the reversible oxidation of malate to oxaloacetate. This chain is Malate dehydrogenase, found in Chlamydia caviae (strain ATCC VR-813 / DSM 19441 / 03DC25 / GPIC) (Chlamydophila caviae).